We begin with the raw amino-acid sequence, 499 residues long: Protein-cysteine N-palmitoyltransferase HHAT (499 aa).

At 1 to 5 the chain is on the cytoplasmic side; sequence MLPGW. Residues 6 to 22 traverse the membrane as a helical segment; that stretch reads ELTLCLLVSLGFHFRSF. The Lumenal portion of the chain corresponds to 23-67; that stretch reads YEVYKVSREHEEELDQEFELEMDTLFGGLKKDPTDFEWNFWMEWG. A helical membrane pass occupies residues 68–84; that stretch reads KRRLVWLFIGHMAVSQL. The Cytoplasmic segment spans residues 85-94; sequence ATLLTKKHRP. The interval 91–155 is essential for palmitoylation of SHH; it reads KHRPWIVMVY…TLRLQSVEEV (65 aa). An intramembrane segment occupies 95 to 119; sequence WIVMVYGMWACWCVLGAPGVVMVLL. Residues 120 to 131 are Cytoplasmic-facing; the sequence is HSTIAFCVAQFR. The chain crosses the membrane as a helical span at residues 132-148; sequence SVLLSWLCSLLLLSTLR. The Lumenal segment spans residues 149 to 162; sequence LQSVEEVKRRWYKT. A helical transmembrane segment spans residues 163–183; sequence ENEYYLLQFTLTVRCLYYTSF. At 184–208 the chain is on the cytoplasmic side; it reads SLELCRQPPSAQPTPSAQGASHSYP. A lipid anchor (S-palmitoyl cysteine) is attached at cysteine 188. The stretch at 209-223 is an intramembrane region; the sequence is WLLTYVFYYPVFHNG. Topologically, residues 224–249 are cytoplasmic; that stretch reads PILNFPEFFRQMQQPELNSLQHSLCI. Residue cysteine 248 is the site of S-palmitoyl cysteine attachment. Residues 250-277 traverse the membrane as a helical segment; it reads VAKGLGRLLCWWWLAELMVHLMYMHALY. The Lumenal portion of the chain corresponds to 278–287; sequence SSAPLLESVS. A helical transmembrane segment spans residues 288-316; that stretch reads CWTLGGLALAQVLFFYVKYLVLFGVPALL. Over 317–369 the chain is Cytoplasmic; that stretch reads MRLDGLTPPPLPRCVSTMFSFTGMWRYFDVGLHNFLIRYVYIPLGGSQHGLLG. Cysteine 330 carries the S-palmitoyl cysteine lipid modification. Residues 370-386 form a helical membrane-spanning segment; it reads TLLSTATTFAFVSYWHG. Histidine 385 is an active-site residue. Residues 387-389 lie on the Lumenal side of the membrane; sequence SYE. A helical membrane pass occupies residues 390 to 405; the sequence is DLWCWAALNWLGVTVE. Residues 406 to 433 lie on the Cytoplasmic side of the membrane; sequence SGVRRLLETPCVRETLARHLSPQAHHRL. A lipid anchor (S-palmitoyl cysteine) is attached at cysteine 416. The chain crosses the membrane as a helical span at residues 434 to 454; that stretch reads HALLAACSTSMLILFNLVFLG. 454-461 provides a ligand contact to GTP; it reads GGIQVGKT. At 455–468 the chain is on the lumenal side; sequence GIQVGKTYWNRIFL. The helical transmembrane segment at 469–487 threads the bilayer; it reads QGWPWVTLSVLGFLYCYSH. The Cytoplasmic segment spans residues 488–499; it reads VDIAWAQTYTVL.

The protein belongs to the membrane-bound acyltransferase family. HHAT subfamily.

The protein localises to the endoplasmic reticulum membrane. Its subcellular location is the golgi apparatus membrane. The catalysed reaction is N-terminal L-cysteinyl-[protein] + hexadecanoyl-CoA = N-terminal N-hexadecanoyl-L-cysteinyl-[protein] + CoA + H(+). It carries out the reaction N-terminal L-cysteinyl-[protein]-C-terminal glycyl cholesterol ester + hexadecanoyl-CoA = N-terminal N-hexadecanoyl-L-cysteinyl-[protein]-C-terminal glycyl cholesterol ester + CoA + H(+). Its function is as follows. Palmitoyl acyltransferase that catalyzes N-terminal palmitoylation of SHH; which is required for SHH signaling during limb development. It also catalyzes N-terminal palmitoylation of DHH. Promotes the transfer of palmitoyl-CoA from the cytoplasmic to the luminal side of the endoplasmic reticulum membrane, where SHH palmitoylation occurs. Plays a role in proper testis cord formation and the differentiation of Leydig cells. The chain is Protein-cysteine N-palmitoyltransferase HHAT (Hhat) from Mus musculus (Mouse).